A 156-amino-acid polypeptide reads, in one-letter code: E3 ubiquitin-protein ligase LAP (156 aa).

The RING-CH-type zinc-finger motif lies at 1–55 (MSDICWICNDVCDERNNFCGCNEEYKVVHIKCMQLWINYSKKKECNLCKTKYNIK). The Cytoplasmic portion of the chain corresponds to 1–73 (MSDICWICND…WNWCFNDKKT (73 aa)). The Zn(2+) site is built by Cys5, Cys8, Cys19, Cys21, His29, Cys32, Cys45, and Cys48. The helical transmembrane segment at 74–94 (TLFKIFFILFALVFIFLTITL) threads the bilayer. At 95–111 (SNDMANLVTGINDLICS) the chain is on the lumenal side. Residues 112–132 (IIFLIVYTVVMLTSICFSVFV) traverse the membrane as a helical segment. Residues 133 to 156 (VAIVVDFLLEAKEKNSFLTIREIV) lie on the Cytoplasmic side of the membrane.

Belongs to the poxviridae LAP protein family.

It is found in the host membrane. The protein resides in the host Golgi apparatus. Its subcellular location is the host trans-Golgi network membrane. It localises to the host early endosome membrane. The enzyme catalyses S-ubiquitinyl-[E2 ubiquitin-conjugating enzyme]-L-cysteine + [acceptor protein]-L-lysine = [E2 ubiquitin-conjugating enzyme]-L-cysteine + N(6)-ubiquitinyl-[acceptor protein]-L-lysine.. Functionally, E3 ubiquitin-protein ligase which promotes ubiquitination and subsequent degradation of host MHC-I and CD4 molecules, presumably to prevent lysis of infected cells by cytotoxic T-lymphocytes and NK cell. Binds target molecules through transmembrane interaction. The result of this ubiquitination is the enhancement of the endocytosis of the target chain and the delivery to the lysosome, where it is proteolytically destroyed. This chain is E3 ubiquitin-protein ligase LAP, found in Yaba-like disease virus (YLDV).